Reading from the N-terminus, the 647-residue chain is DNA ligase (647 aa).

Residues Asp-30–Asp-34, Ser-79–Met-80, and Glu-105 each bind NAD(+). Lys-107 (N6-AMP-lysine intermediate) is an active-site residue. Arg-128, Glu-162, and Lys-301 together coordinate NAD(+). Residues Cys-395, Cys-398, Cys-411, and Cys-416 each contribute to the Zn(2+) site. Residues Lys-570 to Glu-647 form the BRCT domain.

The protein belongs to the NAD-dependent DNA ligase family. LigA subfamily. Requires Mg(2+) as cofactor. It depends on Mn(2+) as a cofactor.

It carries out the reaction NAD(+) + (deoxyribonucleotide)n-3'-hydroxyl + 5'-phospho-(deoxyribonucleotide)m = (deoxyribonucleotide)n+m + AMP + beta-nicotinamide D-nucleotide.. In terms of biological role, DNA ligase that catalyzes the formation of phosphodiester linkages between 5'-phosphoryl and 3'-hydroxyl groups in double-stranded DNA using NAD as a coenzyme and as the energy source for the reaction. It is essential for DNA replication and repair of damaged DNA. The sequence is that of DNA ligase from Campylobacter jejuni subsp. jejuni serotype O:2 (strain ATCC 700819 / NCTC 11168).